The chain runs to 368 residues: Phosphoserine aminotransferase (368 aa).

L-glutamate is bound at residue Arg-44. Residues 78 to 79, Trp-104, Thr-157, Asp-179, and Gln-202 each bind pyridoxal 5'-phosphate; that span reads AT. Lys-203 bears the N6-(pyridoxal phosphate)lysine mark. Residue 244-245 coordinates pyridoxal 5'-phosphate; the sequence is NT.

The protein belongs to the class-V pyridoxal-phosphate-dependent aminotransferase family. SerC subfamily. Homodimer. Requires pyridoxal 5'-phosphate as cofactor.

The protein localises to the cytoplasm. It catalyses the reaction O-phospho-L-serine + 2-oxoglutarate = 3-phosphooxypyruvate + L-glutamate. The enzyme catalyses 4-(phosphooxy)-L-threonine + 2-oxoglutarate = (R)-3-hydroxy-2-oxo-4-phosphooxybutanoate + L-glutamate. The protein operates within amino-acid biosynthesis; L-serine biosynthesis; L-serine from 3-phospho-D-glycerate: step 2/3. It participates in cofactor biosynthesis; pyridoxine 5'-phosphate biosynthesis; pyridoxine 5'-phosphate from D-erythrose 4-phosphate: step 3/5. Its function is as follows. Catalyzes the reversible conversion of 3-phosphohydroxypyruvate to phosphoserine and of 3-hydroxy-2-oxo-4-phosphonooxybutanoate to phosphohydroxythreonine. The protein is Phosphoserine aminotransferase of Neisseria gonorrhoeae (strain ATCC 700825 / FA 1090).